The primary structure comprises 402 residues: Phosphoglycerate kinase (402 aa).

Substrate is bound by residues 24 to 26 (DFN), arginine 40, 63 to 66 (HFGR), arginine 122, and arginine 155. Residues lysine 206, glycine 297, glutamate 328, and 358-361 (GGDS) each bind ATP.

The protein belongs to the phosphoglycerate kinase family. As to quaternary structure, monomer.

The protein resides in the cytoplasm. It carries out the reaction (2R)-3-phosphoglycerate + ATP = (2R)-3-phospho-glyceroyl phosphate + ADP. The protein operates within carbohydrate degradation; glycolysis; pyruvate from D-glyceraldehyde 3-phosphate: step 2/5. The sequence is that of Phosphoglycerate kinase from Prochlorococcus marinus (strain MIT 9515).